The following is a 139-amino-acid chain: Small ribosomal subunit protein uS12 (139 aa).

D102 is subject to 3-methylthioaspartic acid.

This sequence belongs to the universal ribosomal protein uS12 family. As to quaternary structure, part of the 30S ribosomal subunit. Contacts proteins S8 and S17. May interact with IF1 in the 30S initiation complex.

Its function is as follows. With S4 and S5 plays an important role in translational accuracy. Functionally, interacts with and stabilizes bases of the 16S rRNA that are involved in tRNA selection in the A site and with the mRNA backbone. Located at the interface of the 30S and 50S subunits, it traverses the body of the 30S subunit contacting proteins on the other side and probably holding the rRNA structure together. The combined cluster of proteins S8, S12 and S17 appears to hold together the shoulder and platform of the 30S subunit. In Bacillus pumilus (strain SAFR-032), this protein is Small ribosomal subunit protein uS12.